A 267-amino-acid chain; its full sequence is Transcription factor HES-1-A (267 aa).

Residues 1–43 (MPADVMEKNSSSPVAATPASVSNTPDKPKTASEHRKSSKPIME) are disordered. A compositionally biased stretch (low complexity) spans 10 to 22 (SSSPVAATPASVS). Residues 26–35 (DKPKTASEHR) show a composition bias toward basic and acidic residues. Positions 34–91 (HRKSSKPIMEKRRRARINESLGQLKTLILDALKKDSSRHSKLEKADILEMTVKHLRNL) constitute a bHLH domain. An Orange domain is found at 110-143 (YRAGFSECMNEVTRFLSTCEGVNTDVRTRLLGHL). Residues 264 to 267 (WRPW) carry the WRPW motif motif.

In terms of assembly, transcription repression requires formation of a complex with a corepressor protein of the Groucho/TLE family. Interacts with the bHLH protein hes2, and binds DNA in the form of a heterodimer with the bHLH protein hey1/hrt1. Interacts with the bHLH protein hes6; this interaction may inhibit the transcriptional repressor activity. As to expression, starting from late neurula stage, weakly expressed in midline neural cells, where expression is restricted to the superficial layer of the prospective floorplate. Expressed in the posterior somitic mesoderm (PSM) at tailbud stage. During early tailbud stages, broadly expressed within the pronephric mesoderm both around and inside the developing pronephros. During late tailbud to early tadpole stages, expressed more ventrally in the pronephros, and although initially expressed in both the lateral and medial layers, by these later stages expression is predominantly in the lateral layer. Pronephric expression is no longer detectable in late tadpoles (stage 35).

The protein localises to the nucleus. Its function is as follows. Transcriptional repressor of a subset of early mesodermal genes including myod1 and t/bra. Binds DNA on N-box motifs: 5'-CACNAG-3'. Acts as a negative regulator of myogenesis, mediating Notch signaling to repress expression of myod1. The chain is Transcription factor HES-1-A (hes1-a) from Xenopus laevis (African clawed frog).